Here is a 110-residue protein sequence, read N- to C-terminus: Small ribosomal subunit protein bS16 (110 aa).

The tract at residues 87-110 (ARQNPIKAVPRKERKAQAEAAAKG) is disordered.

This sequence belongs to the bacterial ribosomal protein bS16 family.

The protein is Small ribosomal subunit protein bS16 of Bradyrhizobium sp. (strain BTAi1 / ATCC BAA-1182).